The sequence spans 231 residues: Probable calcium-binding protein CML21 (231 aa).

EF-hand domains follow at residues 54–89 (DGLR…LEIS), 90–125 (FDEE…VYLL), 145–180 (PTFE…SGER), and 181–216 (SSGR…WVGI). Asp67, Asp69, Asn71, Ser73, and Glu78 together coordinate Ca(2+). 10 residues coordinate Ca(2+): Asp158, Asn160, Asp162, Tyr164, Glu169, Asp194, Asp196, Asn198, Met200, and Glu205.

Potential calcium sensor. In Arabidopsis thaliana (Mouse-ear cress), this protein is Probable calcium-binding protein CML21 (CML21).